A 345-amino-acid polypeptide reads, in one-letter code: UDP-3-O-acylglucosamine N-acyltransferase (345 aa).

Residue H248 is the Proton acceptor of the active site.

This sequence belongs to the transferase hexapeptide repeat family. LpxD subfamily. As to quaternary structure, homotrimer.

It carries out the reaction a UDP-3-O-[(3R)-3-hydroxyacyl]-alpha-D-glucosamine + a (3R)-hydroxyacyl-[ACP] = a UDP-2-N,3-O-bis[(3R)-3-hydroxyacyl]-alpha-D-glucosamine + holo-[ACP] + H(+). It functions in the pathway bacterial outer membrane biogenesis; LPS lipid A biosynthesis. Functionally, catalyzes the N-acylation of UDP-3-O-acylglucosamine using 3-hydroxyacyl-ACP as the acyl donor. Is involved in the biosynthesis of lipid A, a phosphorylated glycolipid that anchors the lipopolysaccharide to the outer membrane of the cell. This is UDP-3-O-acylglucosamine N-acyltransferase from Trichodesmium erythraeum (strain IMS101).